The following is a 112-amino-acid chain: uncharacterized protein (112 aa).

Positions 91-112 are disordered; the sequence is ENQRKKGTRKRRSSEVDSKEKS. A compositionally biased stretch (basic and acidic residues) spans 103 to 112; sequence SSEVDSKEKS.

This is an uncharacterized protein from Caenorhabditis elegans.